We begin with the raw amino-acid sequence, 367 residues long: Peptide chain release factor 1 (367 aa).

At Gln-243 the chain carries N5-methylglutamine.

This sequence belongs to the prokaryotic/mitochondrial release factor family. In terms of processing, methylated by PrmC. Methylation increases the termination efficiency of RF1.

It is found in the cytoplasm. Its function is as follows. Peptide chain release factor 1 directs the termination of translation in response to the peptide chain termination codons UAG and UAA. The protein is Peptide chain release factor 1 of Acidovorax sp. (strain JS42).